A 74-amino-acid chain; its full sequence is Small heat shock protein hspG10 (74 aa).

One can recognise a sHSP domain in the interval 31-74; sequence KTIIDILPSMDVTMTNDKLIIETELAGISKDHIEIDIKDSILTI.

This sequence belongs to the small heat shock protein (HSP20) family.

In Dictyostelium discoideum (Social amoeba), this protein is Small heat shock protein hspG10 (hspG10).